The sequence spans 492 residues: Dipeptide permease D (492 aa).

The next 13 membrane-spanning stretches (helical) occupy residues 14–34 (VVALQIWEYFSFYGMRALLIL), 49–69 (ALFSAYCSLVYVTPILGGYLA), 91–111 (LVLGASETAPLFLYLSLAIIV), 138–158 (GGFSLMYAAGNIGSIIAPIAC), 167–187 (WAMGFALAAIGMVAGLVIFLC), 212–232 (NWGWLLVLLVTAPLLIAVLFW), 236–256 (SVYALIVATAIGLAVLARIYL), 269–289 (LIVVLTAFSLLFWAFAQQGGS), 312–332 (MFQSINAFAVMLCGMVLAWLV), 344–364 (IWGKFALGLGLMSAGFCILTL), 379–399 (LMVLGLAVMGFAELFIDPVAM), 413–433 (VLTGIYMLLSGAIANYLAGVI), and 458–478 (VFSQITWGALACVGVVLVIWL).

The protein belongs to the major facilitator superfamily. Proton-dependent oligopeptide transporter (POT/PTR) (TC 2.A.17) family. DtpD subfamily.

It localises to the cell inner membrane. Probable proton-dependent permease that transports dipeptides. The sequence is that of Dipeptide permease D from Klebsiella pneumoniae subsp. pneumoniae (strain ATCC 700721 / MGH 78578).